The sequence spans 563 residues: MDIKRTILIVALAIVTYVGVLKWNQDYGQAAMPTQNVAASTTAPGIPDTAAGTNGSASADVPSANATANTAAAPLETPAVASKDLIHVKTDVLDLAIDPVGGDVVQLRLPLYPRRQDRPDVPFQLFDNGGERTFLAQSGLTGTNGPDARAAGRPVYTSTQKTYQLADGQDTMVVDLKFSENGVNYIKRFTFKRGLYDLVMTYVVDNQSAQPWSGNLFAQLKRDASSDPSSTTATGTATYLGAALWTAAEPYKKVSMKDIDKGQVKETVQGGWVAWLQHYFVTAWIPDHNATNAVQTRKDSQGNYIIGFTSPTLSVAPGAQGETSATLYAGPKSQAVLKELSPGLELTVDYGFLWFIAQPIFWLLQHIHAILGNWGWSIIVLTMLIKGLFFPLSAASYKSMARMRAVAPKLALLKEQHGDDRQKMSQAMMELYKKEKINPLGGCLPILVQMPVFLSLYWVLLESVEMRQAPWILWITDLSIKDPFFILPIIMGATMFIQQRLNPTPPDPMQAKVMKMMPIIFTFFFLWFPAGLVLYWVVNNTLSIAQQAYITRKIEAATKKAAV.

The helical transmembrane segment at 1 to 21 threads the bilayer; it reads MDIKRTILIVALAIVTYVGVL. The tract at residues 43–62 is disordered; it reads APGIPDTAAGTNGSASADVP. Helical transmembrane passes span 344 to 364, 370 to 390, 440 to 460, 471 to 491, and 518 to 538; these read LELT…FWLL, ILGN…GLFF, LGGC…YWVL, WILW…PIIM, and PIIF…YWVV.

Belongs to the OXA1/ALB3/YidC family. Type 1 subfamily. In terms of assembly, interacts with the Sec translocase complex via SecD. Specifically interacts with transmembrane segments of nascent integral membrane proteins during membrane integration.

Its subcellular location is the cell inner membrane. In terms of biological role, required for the insertion and/or proper folding and/or complex formation of integral membrane proteins into the membrane. Involved in integration of membrane proteins that insert both dependently and independently of the Sec translocase complex, as well as at least some lipoproteins. Aids folding of multispanning membrane proteins. In Pseudomonas syringae pv. syringae (strain B728a), this protein is Membrane protein insertase YidC.